Consider the following 58-residue polypeptide: MLNMISTFFDSSSNFSEAFLAKLPEAYAIFDPIVDVMPIIPVFFLLLAFVWQAAVSFR.

A propeptide spanning residues 1–21 is cleaved from the precursor; it reads MLNMISTFFDSSSNFSEAFLA. The helical transmembrane segment at 29–49 threads the bilayer; it reads IFDPIVDVMPIIPVFFLLLAF.

It belongs to the PsbK family. As to quaternary structure, PSII is composed of 1 copy each of membrane proteins PsbA, PsbB, PsbC, PsbD, PsbE, PsbF, PsbH, PsbI, PsbJ, PsbK, PsbL, PsbM, PsbT, PsbX, PsbY, PsbZ, Psb30/Ycf12, at least 3 peripheral proteins of the oxygen-evolving complex and a large number of cofactors. It forms dimeric complexes.

Its subcellular location is the plastid. The protein localises to the chloroplast thylakoid membrane. Its function is as follows. One of the components of the core complex of photosystem II (PSII). PSII is a light-driven water:plastoquinone oxidoreductase that uses light energy to abstract electrons from H(2)O, generating O(2) and a proton gradient subsequently used for ATP formation. It consists of a core antenna complex that captures photons, and an electron transfer chain that converts photonic excitation into a charge separation. This is Photosystem II reaction center protein K from Chaetosphaeridium globosum (Charophycean green alga).